A 358-amino-acid polypeptide reads, in one-letter code: Aromatic amino acid aminotransferase (358 aa).

Lysine 222 carries the post-translational modification N6-(pyridoxal phosphate)lysine.

This sequence belongs to the class-II pyridoxal-phosphate-dependent aminotransferase family. As to quaternary structure, homodimer. The cofactor is pyridoxal 5'-phosphate.

It catalyses the reaction an aromatic L-alpha-amino acid + 2-oxoglutarate = an aromatic oxo-acid + L-glutamate. In terms of biological role, aminotransferase that catalyzes the conversion of aromatic amino acids and 2-oxoglutarate into corresponding aromatic oxo acids and L-glutamate. The chain is Aromatic amino acid aminotransferase from Mycobacterium sp. (strain JLS).